Consider the following 338-residue polypeptide: Glycerol-3-phosphate dehydrogenase [NAD(P)+] (338 aa).

3 residues coordinate NADPH: W11, R30, and K109. Positions 109, 143, and 145 each coordinate sn-glycerol 3-phosphate. A147 is a binding site for NADPH. K198, D251, S261, R262, and N263 together coordinate sn-glycerol 3-phosphate. The Proton acceptor role is filled by K198. R262 serves as a coordination point for NADPH. Residues V286 and E288 each coordinate NADPH.

The protein belongs to the NAD-dependent glycerol-3-phosphate dehydrogenase family.

It is found in the cytoplasm. It catalyses the reaction sn-glycerol 3-phosphate + NAD(+) = dihydroxyacetone phosphate + NADH + H(+). The catalysed reaction is sn-glycerol 3-phosphate + NADP(+) = dihydroxyacetone phosphate + NADPH + H(+). It functions in the pathway membrane lipid metabolism; glycerophospholipid metabolism. Catalyzes the reduction of the glycolytic intermediate dihydroxyacetone phosphate (DHAP) to sn-glycerol 3-phosphate (G3P), the key precursor for phospholipid synthesis. This is Glycerol-3-phosphate dehydrogenase [NAD(P)+] from Cupriavidus taiwanensis (strain DSM 17343 / BCRC 17206 / CCUG 44338 / CIP 107171 / LMG 19424 / R1) (Ralstonia taiwanensis (strain LMG 19424)).